The following is a 1417-amino-acid chain: DNA-directed RNA polymerase subunit beta' (1417 aa).

Zn(2+) contacts are provided by C68, C70, C83, and C86. Residues D458, D460, and D462 each coordinate Mg(2+). Positions 811, 884, 891, and 894 each coordinate Zn(2+).

The protein belongs to the RNA polymerase beta' chain family. In terms of assembly, the RNAP catalytic core consists of 2 alpha, 1 beta, 1 beta' and 1 omega subunit. When a sigma factor is associated with the core the holoenzyme is formed, which can initiate transcription. It depends on Mg(2+) as a cofactor. The cofactor is Zn(2+).

The catalysed reaction is RNA(n) + a ribonucleoside 5'-triphosphate = RNA(n+1) + diphosphate. Functionally, DNA-dependent RNA polymerase catalyzes the transcription of DNA into RNA using the four ribonucleoside triphosphates as substrates. This is DNA-directed RNA polymerase subunit beta' from Francisella tularensis subsp. tularensis (strain FSC 198).